Consider the following 114-residue polypeptide: UPF0145 protein TTHA1944 (114 aa).

It belongs to the UPF0145 family.

In Thermus thermophilus (strain ATCC 27634 / DSM 579 / HB8), this protein is UPF0145 protein TTHA1944.